The following is a 5058-amino-acid chain: ATP-binding cassette sub-family A member 13 (5058 aa).

Transmembrane regions (helical) follow at residues 23–43 (PVLFLAEFFWPCILFVILTVL), 3568–3588 (VGFFFPLIMMLTWMVSVASMV), 3607–3627 (GVHPVIHFLAWFLENMAVLTI), 3648–3668 (FIVFLFLLDFGMSVVMLSYLL), 3679–3699 (ALCTSLVYMISFLPYIVLLVL), 3709–3729 (TFLCLLSTTAFGQGVFFITFL), and 3752–3772 (FGWVCWMILFDSSLYFLCGWY). The ABC transporter 1 domain maps to 3842-4074 (VTLVSVTKEY…YGQGLRLTLT (233 aa)). Residue 3875-3882 (GTNGAGKT) participates in ATP binding. 7 consecutive transmembrane segments (helical) span residues 4226–4246 (TLADLLLPVLFVALAMGLFMV), 4458–4478 (VALCIVLGFSILSASIGSSVV), 4504–4524 (FLYDMLFYLVSVCLCVAVIVA), 4536–4556 (LAATALLLSLFGYATLPWMYL), 4568–4588 (FISYVSLNFIFGLCTMLITIM), 4607–4627 (VLKWVFTIFPQFCLGQGLVEL), and 4651–4671 (MNFLGWIFVQLASQGTVLLLL). Residues 4718 to 4956 (LVLYNLSKHY…FGDGYTVKVW (239 aa)) form the ABC transporter 2 domain. 4754–4761 (GVNGAGKS) lines the ATP pocket.

This sequence belongs to the ABC transporter superfamily. As to expression, significantly expressed in the bone marrow, trachea, testis, thyroid and lung as well as in skin fibroblasts.

Its subcellular location is the cytoplasmic vesicle membrane. It carries out the reaction cholesterol(in) + ATP + H2O = cholesterol(out) + ADP + phosphate + H(+). Functionally, may mediate the cholesterol and gangliosides transport from the plasma membrane to intracellular vesicles in an ATP hydrolysis dependent manner, thus playing a role in their internalization by endocytic retrograde transport and may also participate in the endocytosis of synaptic vesicle in cortical neurons. This Homo sapiens (Human) protein is ATP-binding cassette sub-family A member 13.